Here is a 367-residue protein sequence, read N- to C-terminus: Protein RecA (367 aa).

An ATP-binding site is contributed by 73 to 80; that stretch reads GPESSGKT.

Belongs to the RecA family.

Its subcellular location is the cytoplasm. In terms of biological role, can catalyze the hydrolysis of ATP in the presence of single-stranded DNA, the ATP-dependent uptake of single-stranded DNA by duplex DNA, and the ATP-dependent hybridization of homologous single-stranded DNAs. It interacts with LexA causing its activation and leading to its autocatalytic cleavage. In Delftia acidovorans (strain DSM 14801 / SPH-1), this protein is Protein RecA.